The primary structure comprises 432 residues: Glyceraldehyde-3-phosphate dehydrogenase, testis-specific (432 aa).

Residues 1 to 97 form a testis-specific N-terminal extension region; that stretch reads MSRRDVVLTN…PPPPPPPKPA (97 aa). The interval 40-101 is disordered; that stretch reads PPPPKVEEPP…PPPKPAKELT (62 aa). Positions 44–55 are enriched in basic and acidic residues; the sequence is KVEEPPPPKEEP. Composition is skewed to pro residues over residues 56-67 and 75-95; these read PPPPPPPPPPQI and APPP…PPPK. NAD(+) is bound by residues 109–110, Asp-130, Lys-175, Tyr-197, and Thr-217; that span reads RI. Residues 247–249, Thr-278, 307–308, and Arg-330 contribute to the D-glyceraldehyde 3-phosphate site; these read SCT and TG. The Nucleophile role is filled by Cys-248. Ser-350 carries the post-translational modification Phosphoserine. Residue Asn-412 coordinates NAD(+).

This sequence belongs to the glyceraldehyde-3-phosphate dehydrogenase family. In terms of assembly, homotetramer. Expressed in both head and flagellum of epididymal sperm.

The protein localises to the cytoplasm. It catalyses the reaction D-glyceraldehyde 3-phosphate + phosphate + NAD(+) = (2R)-3-phospho-glyceroyl phosphate + NADH + H(+). It participates in carbohydrate degradation; glycolysis; pyruvate from D-glyceraldehyde 3-phosphate: step 1/5. Functionally, may play an important role in regulating the switch between different pathways for energy production during spermiogenesis and in the spermatozoon. Required for sperm motility and male fertility. The chain is Glyceraldehyde-3-phosphate dehydrogenase, testis-specific (Gapdhs) from Rattus norvegicus (Rat).